Reading from the N-terminus, the 76-residue chain is MLKTDALLYFGSKTKLAQAAGIRLASLYSWKGDLVPEGRAMRLQEASGGELQYDPKVYDEYRKTKRAGRLNNENHS.

A DNA-binding region spans residues 13 to 33; the sequence is KTKLAQAAGIRLASLYSWKGD.

Its function is as follows. This protein is a repressor of division inhibition gene dicB. In Escherichia coli (strain K12), this protein is Repressor protein of division inhibition gene dicB (dicC).